The sequence spans 467 residues: Putative pentatricopeptide repeat-containing protein At1g10330 (467 aa).

PPR repeat units lie at residues 50-84, 85-119, 120-150, 151-181, 182-216, 220-256, 257-287, 288-322, 323-358, and 359-389; these read TKCV…HVQP, NNLT…GFLW, DPFV…ILNP, CVVA…MPVT, DVVS…ERAV, NEAT…EIIL, TTTL…IRDK, KVCA…YVHP, NGIT…KIIP, and TSEH…LPFE. The interval 394–467 is type E motif; degenerate; that stretch reads VLGALLGACK…RKIPAYSVLT (74 aa).

It belongs to the PPR family. PCMP-E subfamily.

This is Putative pentatricopeptide repeat-containing protein At1g10330 (PCMP-E71) from Arabidopsis thaliana (Mouse-ear cress).